The primary structure comprises 750 residues: Phosphate transporter PHO1 homolog 7 (750 aa).

The 298-residue stretch at methionine 1–glutamate 298 folds into the SPX domain. Residues methionine 1–threonine 350 lie on the Cytoplasmic side of the membrane. Residues phenylalanine 351–isoleucine 371 traverse the membrane as a helical segment. Residues histidine 372–proline 391 lie on the Extracellular side of the membrane. A helical transmembrane segment spans residues leucine 392–phenylalanine 412. Residues tryptophan 413–arginine 435 are Cytoplasmic-facing. A helical transmembrane segment spans residues histidine 436 to leucine 456. Topologically, residues aspartate 457–glutamate 472 are extracellular. A helical transmembrane segment spans residues leucine 473 to phenylalanine 493. Residues tyrosine 494–lysine 622 lie on the Cytoplasmic side of the membrane. One can recognise an EXS domain in the interval arginine 557 to serine 750. The chain crosses the membrane as a helical span at residues isoleucine 623–phenylalanine 643. Topologically, residues aspartate 644–alanine 666 are extracellular. The helical transmembrane segment at valine 667–leucine 687 threads the bilayer. Residues aspartate 688–serine 750 are Cytoplasmic-facing.

It belongs to the SYG1 (TC 2.A.94) family. As to expression, expressed in root tips, vascular cylinders of roots and filaments, leaf hydathodes, stem, receptacle and stigma apex.

It is found in the cell membrane. Its function is as follows. May transport inorganic phosphate (Pi). In Arabidopsis thaliana (Mouse-ear cress), this protein is Phosphate transporter PHO1 homolog 7 (PHO1-H7).